Reading from the N-terminus, the 235-residue chain is Peroxynitrite isomerase 2 (235 aa).

The short motif at 82-88 (GVWRGEG) is the GXWXGXG element. The heme b site is built by Lys198 and His225.

This sequence belongs to the nitrobindin family. As to quaternary structure, homodimer. It depends on heme b as a cofactor.

It carries out the reaction peroxynitrite = nitrate. The protein operates within nitrogen metabolism. Its function is as follows. Heme-binding protein able to scavenge peroxynitrite and to protect free L-tyrosine against peroxynitrite-mediated nitration, by acting as a peroxynitrite isomerase that converts peroxynitrite to nitrate. Therefore, this protein likely plays a role in peroxynitrite sensing and in the detoxification of reactive nitrogen and oxygen species (RNS and ROS, respectively). Is able to bind nitric oxide (NO) in vitro, but may act as a sensor of peroxynitrite levels in vivo. This chain is Peroxynitrite isomerase 2, found in Mycolicibacterium paratuberculosis (strain ATCC BAA-968 / K-10) (Mycobacterium paratuberculosis).